A 354-amino-acid polypeptide reads, in one-letter code: Protein RecA (354 aa).

67-74 is a binding site for ATP; that stretch reads GPESSGKT.

This sequence belongs to the RecA family.

The protein localises to the cytoplasm. Functionally, can catalyze the hydrolysis of ATP in the presence of single-stranded DNA, the ATP-dependent uptake of single-stranded DNA by duplex DNA, and the ATP-dependent hybridization of homologous single-stranded DNAs. It interacts with LexA causing its activation and leading to its autocatalytic cleavage. The protein is Protein RecA of Haemophilus influenzae (strain 86-028NP).